Reading from the N-terminus, the 422-residue chain is Serine--tRNA ligase (422 aa).

Residue 229 to 231 (TAE) coordinates L-serine. 260-262 (RKE) contributes to the ATP binding site. Glu283 lines the L-serine pocket. Residue 347 to 350 (EISS) coordinates ATP. Ser383 provides a ligand contact to L-serine.

This sequence belongs to the class-II aminoacyl-tRNA synthetase family. Type-1 seryl-tRNA synthetase subfamily. As to quaternary structure, homodimer. The tRNA molecule binds across the dimer.

It localises to the cytoplasm. It catalyses the reaction tRNA(Ser) + L-serine + ATP = L-seryl-tRNA(Ser) + AMP + diphosphate + H(+). It carries out the reaction tRNA(Sec) + L-serine + ATP = L-seryl-tRNA(Sec) + AMP + diphosphate + H(+). Its pathway is aminoacyl-tRNA biosynthesis; selenocysteinyl-tRNA(Sec) biosynthesis; L-seryl-tRNA(Sec) from L-serine and tRNA(Sec): step 1/1. Functionally, catalyzes the attachment of serine to tRNA(Ser). Is also able to aminoacylate tRNA(Sec) with serine, to form the misacylated tRNA L-seryl-tRNA(Sec), which will be further converted into selenocysteinyl-tRNA(Sec). The polypeptide is Serine--tRNA ligase (Geotalea uraniireducens (strain Rf4) (Geobacter uraniireducens)).